A 429-amino-acid chain; its full sequence is Ribosomal RNA small subunit methyltransferase B (429 aa).

Residues 254–260 (CAAPGGK), Asp-277, Asp-303, and Asp-322 each bind S-adenosyl-L-methionine. The Nucleophile role is filled by Cys-375.

Belongs to the class I-like SAM-binding methyltransferase superfamily. RsmB/NOP family.

The protein resides in the cytoplasm. It catalyses the reaction cytidine(967) in 16S rRNA + S-adenosyl-L-methionine = 5-methylcytidine(967) in 16S rRNA + S-adenosyl-L-homocysteine + H(+). In terms of biological role, specifically methylates the cytosine at position 967 (m5C967) of 16S rRNA. This Salmonella arizonae (strain ATCC BAA-731 / CDC346-86 / RSK2980) protein is Ribosomal RNA small subunit methyltransferase B.